We begin with the raw amino-acid sequence, 57 residues long: Ribosome modulation factor (57 aa).

Positions 1 to 28 (MKRQKRDRLERAQSQGYKAGLNGRSHDE) are disordered.

It belongs to the ribosome modulation factor family.

It localises to the cytoplasm. In terms of biological role, during stationary phase, converts 70S ribosomes to an inactive dimeric form (100S ribosomes). The chain is Ribosome modulation factor from Vibrio cholerae serotype O1 (strain MJ-1236).